The chain runs to 127 residues: Glycine cleavage system H protein (127 aa).

The Lipoyl-binding domain maps to Glu-22 to Glu-104. At Lys-63 the chain carries N6-lipoyllysine.

The protein belongs to the GcvH family. The glycine cleavage system is composed of four proteins: P, T, L and H. (R)-lipoate serves as cofactor.

Functionally, the glycine cleavage system catalyzes the degradation of glycine. The H protein shuttles the methylamine group of glycine from the P protein to the T protein. In terms of biological role, is also involved in protein lipoylation via its role as an octanoyl/lipoyl carrier protein intermediate. The sequence is that of Glycine cleavage system H protein from Bacillus cereus (strain G9842).